The primary structure comprises 199 residues: MKFSPLVDELIQSLRALPGVGPKSAQRMAFQLLERERKVGLKLADSLQKAMSEVGHCQSCRTFTEQDLCPICSSHRRINTGIICVVETPADVLAIEAGGHFNGRYFVLLGHLSPLDGVGPEELGLALLERHLTSNEVSELILATNPTVEGDATAHFIADMARRHNVVISRIAHGVPVGGELEYVDSTTLALSFNGRIPL.

The C4-type zinc-finger motif lies at 57–72 (CQSCRTFTEQDLCPIC). The 96-residue stretch at 81–176 (GIICVVETPA…VISRIAHGVP (96 aa)) folds into the Toprim domain.

The protein belongs to the RecR family.

Functionally, may play a role in DNA repair. It seems to be involved in an RecBC-independent recombinational process of DNA repair. It may act with RecF and RecO. This is Recombination protein RecR from Shewanella frigidimarina (strain NCIMB 400).